We begin with the raw amino-acid sequence, 1192 residues long: Reticulon-4 (1192 aa).

The residue at position 1 (M1) is an N-acetylmethionine. Residues 1-204 (MEDLDQSPLV…ASEPVIRSSA (204 aa)) form a disordered region. The Cytoplasmic portion of the chain corresponds to 1 to 1018 (MEDLDQSPLV…LYWRDIKKTG (1018 aa)). Phosphoserine occurs at positions 7 and 15. Residues 31–53 (PEDEEEEEEEEEEDEDEDLEELE) are compositionally biased toward acidic residues. Over residues 65–77 (AAPVPTAPAAGAP) the composition is skewed to low complexity. The span at 87–101 (PPAPRGPLPAAPPVA) shows a compositional bias: pro residues. Residue S107 is modified to Phosphoserine. Over residues 110-132 (PSPVSSTVPAPSPLSAAAVSPSK) the composition is skewed to low complexity. A compositionally biased stretch (pro residues) spans 141–150 (ARPPPPPPAS). Residue S152 is modified to Phosphoserine. Pro residues predominate over residues 159–173 (WTPPAPAPAAPPSTP). 5 positions are modified to phosphoserine: S181, S182, S184, S361, and S446. Residues 427–458 (DSLEQTNHEKDSESSNDDTSFPSTPEGIKDRS) form a disordered region. T450 is subject to Phosphothreonine. S511 carries the phosphoserine modification. A compositionally biased stretch (basic and acidic residues) spans 722–734 (AKVEQPVPDHSEL). The disordered stretch occupies residues 722 to 762 (AKVEQPVPDHSELVEDSSPDSEPVDLFSDDSIPDVPQKQDE). The span at 735–753 (VEDSSPDSEPVDLFSDDSI) shows a compositional bias: acidic residues. A Phosphoserine modification is found at S749. A Phosphothreonine modification is found at T858. 2 positions are modified to phosphoserine: S881 and S991. The 188-residue stretch at 1005 to 1192 (VVDLLYWRDI…KIPGLKRKAE (188 aa)) folds into the Reticulon domain. A helical membrane pass occupies residues 1019–1039 (VVFGASLFLLLSLTVFSIVSV). At 1040 to 1133 (TAYIALALLS…LMWVFTYVGA (94 aa)) the chain is on the lumenal side. K1104 carries the N6-acetyllysine modification. The helical transmembrane segment at 1134–1154 (LFNGLTLLILALISLFSVPVI) threads the bilayer. The Cytoplasmic portion of the chain corresponds to 1155–1192 (YERHQAQIDHYLGLANKNVKDAMAKIQAKIPGLKRKAE).

Binds to RTN4R. Interacts with ATL1. Interacts with TMEM170A. Interacts with RTN4IP1. In terms of assembly, interacts in trans with CNTNAP1. Interacts with REEP5. Interacts with synaptic plasticity regulator PANTS; the interaction results in enhanced RTN4-mediated inhibition of AMPA receptor clustering. Interacts with GPR50. As to quaternary structure, homodimer. Interacts with BAD/Bcl-xl and BCL2. Interact with RTN3. Interacts with NGBR. Interacts with SPTLC1. Interacts with GRAMD4. Interacts with CDH5. Interacts with BACE1 and BACE2. Interacts with REEP5. Interacts with RETREG3. Interacts with BACE1 and BACE2. Interacts with TMEM33. In terms of tissue distribution, isoform A: is specifically expressed in brain and testis and weakly in heart and skeletal muscle. Isoform B: widely expressed except for the liver. Highly expressed in endothelial cells and vascular smooth muscle cells, including blood vessels and mesenteric arteries. Isoform C: is expressed in brain, skeletal muscle and adipocytes. Isoform D is testis-specific.

It localises to the endoplasmic reticulum membrane. Its subcellular location is the cell membrane. The protein resides in the synapse. The protein localises to the cell junction. Required to induce the formation and stabilization of endoplasmic reticulum (ER) tubules. They regulate membrane morphogenesis in the ER by promoting tubular ER production. They influence nuclear envelope expansion, nuclear pore complex formation and proper localization of inner nuclear membrane proteins. However each isoform have specific functions mainly depending on their tissue expression specificities. In terms of biological role, developmental neurite growth regulatory factor with a role as a negative regulator of axon-axon adhesion and growth, and as a facilitator of neurite branching. Regulates neurite fasciculation, branching and extension in the developing nervous system. Involved in down-regulation of growth, stabilization of wiring and restriction of plasticity in the adult CNS. Regulates the radial migration of cortical neurons via an RTN4R-LINGO1 containing receptor complex. Acts as a negative regulator of central nervous system angiogenesis. Inhibits spreading, migration and sprouting of primary brain microvascular endothelial cells (MVECs). Also induces the retraction of MVECs lamellipodia and filopodia in a ROCK pathway-dependent manner. Functionally, mainly function in endothelial cells and vascular smooth muscle cells, is also involved in immune system regulation. Modulator of vascular remodeling, promotes the migration of endothelial cells but inhibits the migration of vascular smooth muscle cells. Regulates endothelial sphingolipid biosynthesis with direct effects on vascular function and blood pressure. Inhibits serine palmitoyltransferase, SPTLC1, the rate-limiting enzyme of the novo sphingolipid biosynthetic pathway, thereby controlling production of endothelial sphingosine-1-phosphate (S1P). Required to promote macrophage homing and functions such as cytokine/chemokine gene expression involved in angiogenesis, arteriogenesis and tissue repair. Mediates ICAM1 induced transendothelial migration of leukocytes such as monocytes and neutrophils and acute inflammation. Necessary for immune responses triggered by nucleic acid sensing TLRs, such as TLR9, is required for proper TLR9 location to endolysosomes. Also involved in immune response to LPS. Plays a role in liver regeneration through the modulation of hepatocytes proliferation. Reduces the anti-apoptotic activity of Bcl-xl and Bcl-2. This is likely consecutive to their change in subcellular location, from the mitochondria to the endoplasmic reticulum, after binding and sequestration. With isoform C, inhibits BACE1 activity and amyloid precursor protein processing. Its function is as follows. Regulates cardiomyocyte apoptosis upon hypoxic conditions. With isoform B, inhibits BACE1 activity and amyloid precursor protein processing. The chain is Reticulon-4 from Homo sapiens (Human).